We begin with the raw amino-acid sequence, 306 residues long: Protein-L-isoaspartate O-methyltransferase 2 (306 aa).

The segment at 1-82 (MSTTPPRNKF…ASAATAGGGG (82 aa)) is disordered. A compositionally biased stretch (pro residues) spans 38-48 (PAAPTPAPAKP). Low complexity predominate over residues 54–77 (PRTAAPAPAPVPASAVEQRASAAT). The active site involves serine 142.

This sequence belongs to the methyltransferase superfamily. L-isoaspartyl/D-aspartyl protein methyltransferase family.

The protein localises to the cytoplasm. The enzyme catalyses [protein]-L-isoaspartate + S-adenosyl-L-methionine = [protein]-L-isoaspartate alpha-methyl ester + S-adenosyl-L-homocysteine. Functionally, catalyzes the methyl esterification of L-isoaspartyl residues in peptides and proteins that result from spontaneous decomposition of normal L-aspartyl and L-asparaginyl residues. It plays a role in the repair and/or degradation of damaged proteins. This is Protein-L-isoaspartate O-methyltransferase 2 from Cupriavidus necator (strain ATCC 17699 / DSM 428 / KCTC 22496 / NCIMB 10442 / H16 / Stanier 337) (Ralstonia eutropha).